A 125-amino-acid chain; its full sequence is Small ribosomal subunit protein uS12m (125 aa).

The segment at 1 to 24 (MPTSNQSIRHGREKKRRTDRTRAL) is disordered. Basic residues predominate over residues 9-19 (RHGREKKRRTD).

The protein belongs to the universal ribosomal protein uS12 family.

The protein resides in the mitochondrion. Functionally, protein S12 is involved in the translation initiation step. The polypeptide is Small ribosomal subunit protein uS12m (RPS12) (Pinus sylvestris (Scotch pine)).